Reading from the N-terminus, the 162-residue chain is uncharacterized protein (162 aa).

A signal peptide spans 1 to 34 (MRKKNNIKKWLLIIAGFLIICIITLFVMVSGNKV).

This is an uncharacterized protein from Bacillus subtilis (strain 168).